The following is a 145-amino-acid chain: Large ribosomal subunit protein uL13 (145 aa).

The protein belongs to the universal ribosomal protein uL13 family. As to quaternary structure, part of the 50S ribosomal subunit.

This protein is one of the early assembly proteins of the 50S ribosomal subunit, although it is not seen to bind rRNA by itself. It is important during the early stages of 50S assembly. The polypeptide is Large ribosomal subunit protein uL13 (Bacillus cereus (strain G9842)).